The following is a 450-amino-acid chain: Phosphoglucosamine mutase (450 aa).

Residue Ser102 is the Phosphoserine intermediate of the active site. Positions 102, 243, 245, and 247 each coordinate Mg(2+). Ser102 carries the post-translational modification Phosphoserine.

Belongs to the phosphohexose mutase family. It depends on Mg(2+) as a cofactor. Activated by phosphorylation.

The enzyme catalyses alpha-D-glucosamine 1-phosphate = D-glucosamine 6-phosphate. Catalyzes the conversion of glucosamine-6-phosphate to glucosamine-1-phosphate. This chain is Phosphoglucosamine mutase, found in Rhizobium johnstonii (strain DSM 114642 / LMG 32736 / 3841) (Rhizobium leguminosarum bv. viciae).